A 335-amino-acid chain; its full sequence is Flagellar P-ring protein (335 aa).

The signal sequence occupies residues Met-1–Ala-17.

The protein belongs to the FlgI family. In terms of assembly, the basal body constitutes a major portion of the flagellar organelle and consists of four rings (L,P,S, and M) mounted on a central rod.

Its subcellular location is the periplasm. It localises to the bacterial flagellum basal body. Assembles around the rod to form the L-ring and probably protects the motor/basal body from shearing forces during rotation. The polypeptide is Flagellar P-ring protein (Borreliella burgdorferi (strain ZS7) (Borrelia burgdorferi)).